An 89-amino-acid polypeptide reads, in one-letter code: Small ribosomal subunit protein uS15 (89 aa).

The protein belongs to the universal ribosomal protein uS15 family. Part of the 30S ribosomal subunit. Forms a bridge to the 50S subunit in the 70S ribosome, contacting the 23S rRNA.

One of the primary rRNA binding proteins, it binds directly to 16S rRNA where it helps nucleate assembly of the platform of the 30S subunit by binding and bridging several RNA helices of the 16S rRNA. Its function is as follows. Forms an intersubunit bridge (bridge B4) with the 23S rRNA of the 50S subunit in the ribosome. This is Small ribosomal subunit protein uS15 from Syntrophobacter fumaroxidans (strain DSM 10017 / MPOB).